A 206-amino-acid polypeptide reads, in one-letter code: Thiamine-phosphate synthase (206 aa).

4-amino-2-methyl-5-(diphosphooxymethyl)pyrimidine is bound by residues Gln-35–Lys-39 and Asn-67. Positions 68 and 87 each coordinate Mg(2+). Ser-106 contributes to the 4-amino-2-methyl-5-(diphosphooxymethyl)pyrimidine binding site. Residue Thr-132–Thr-134 coordinates 2-[(2R,5Z)-2-carboxy-4-methylthiazol-5(2H)-ylidene]ethyl phosphate. A 4-amino-2-methyl-5-(diphosphooxymethyl)pyrimidine-binding site is contributed by Lys-135. 2-[(2R,5Z)-2-carboxy-4-methylthiazol-5(2H)-ylidene]ethyl phosphate is bound by residues Gly-163 and Ile-183–Ser-184.

This sequence belongs to the thiamine-phosphate synthase family. It depends on Mg(2+) as a cofactor.

The catalysed reaction is 2-[(2R,5Z)-2-carboxy-4-methylthiazol-5(2H)-ylidene]ethyl phosphate + 4-amino-2-methyl-5-(diphosphooxymethyl)pyrimidine + 2 H(+) = thiamine phosphate + CO2 + diphosphate. It catalyses the reaction 2-(2-carboxy-4-methylthiazol-5-yl)ethyl phosphate + 4-amino-2-methyl-5-(diphosphooxymethyl)pyrimidine + 2 H(+) = thiamine phosphate + CO2 + diphosphate. The enzyme catalyses 4-methyl-5-(2-phosphooxyethyl)-thiazole + 4-amino-2-methyl-5-(diphosphooxymethyl)pyrimidine + H(+) = thiamine phosphate + diphosphate. It functions in the pathway cofactor biosynthesis; thiamine diphosphate biosynthesis; thiamine phosphate from 4-amino-2-methyl-5-diphosphomethylpyrimidine and 4-methyl-5-(2-phosphoethyl)-thiazole: step 1/1. Its function is as follows. Condenses 4-methyl-5-(beta-hydroxyethyl)thiazole monophosphate (THZ-P) and 2-methyl-4-amino-5-hydroxymethyl pyrimidine pyrophosphate (HMP-PP) to form thiamine monophosphate (TMP). The chain is Thiamine-phosphate synthase from Methanospirillum hungatei JF-1 (strain ATCC 27890 / DSM 864 / NBRC 100397 / JF-1).